The chain runs to 101 residues: Small ribosomal subunit protein uS14 (101 aa).

This sequence belongs to the universal ribosomal protein uS14 family. In terms of assembly, part of the 30S ribosomal subunit. Contacts proteins S3 and S10.

Binds 16S rRNA, required for the assembly of 30S particles and may also be responsible for determining the conformation of the 16S rRNA at the A site. This is Small ribosomal subunit protein uS14 from Shewanella baltica (strain OS155 / ATCC BAA-1091).